A 251-amino-acid polypeptide reads, in one-letter code: Sugar fermentation stimulation protein homolog (251 aa).

The protein belongs to the SfsA family.

This is Sugar fermentation stimulation protein homolog from Yersinia pseudotuberculosis serotype O:1b (strain IP 31758).